The primary structure comprises 199 residues: dITP/XTP pyrophosphatase (199 aa).

Residue 7–12 (TGNAGK) coordinates substrate. Mg(2+) is bound by residues E37 and D66. The active-site Proton acceptor is the D66. Substrate-binding positions include S67, 146 to 149 (FGYD), K169, and 174 to 175 (HR).

The protein belongs to the HAM1 NTPase family. Homodimer. Mg(2+) is required as a cofactor.

The catalysed reaction is XTP + H2O = XMP + diphosphate + H(+). It catalyses the reaction dITP + H2O = dIMP + diphosphate + H(+). It carries out the reaction ITP + H2O = IMP + diphosphate + H(+). Functionally, pyrophosphatase that catalyzes the hydrolysis of nucleoside triphosphates to their monophosphate derivatives, with a high preference for the non-canonical purine nucleotides XTP (xanthosine triphosphate), dITP (deoxyinosine triphosphate) and ITP. Seems to function as a house-cleaning enzyme that removes non-canonical purine nucleotides from the nucleotide pool, thus preventing their incorporation into DNA/RNA and avoiding chromosomal lesions. This Deinococcus geothermalis (strain DSM 11300 / CIP 105573 / AG-3a) protein is dITP/XTP pyrophosphatase.